Reading from the N-terminus, the 197-residue chain is Probable GTP-binding protein EngB (197 aa).

The 172-residue stretch at 26–197 folds into the EngB-type G domain; it reads DLPEIALAGR…TSWDAILESL (172 aa). Residues 34–41, 61–65, 79–82, 146–149, and 178–180 contribute to the GTP site; these read GRSNVGKS, GKTQS, DVPG, TKAD, and FSS. Mg(2+) contacts are provided by S41 and T63.

It belongs to the TRAFAC class TrmE-Era-EngA-EngB-Septin-like GTPase superfamily. EngB GTPase family. Mg(2+) is required as a cofactor.

In terms of biological role, necessary for normal cell division and for the maintenance of normal septation. In Streptococcus mutans serotype c (strain ATCC 700610 / UA159), this protein is Probable GTP-binding protein EngB.